A 172-amino-acid chain; its full sequence is Envelope protein UL45 (172 aa).

At M1–A27 the chain is on the intravirion side. A helical; Signal-anchor for type II membrane protein transmembrane segment spans residues A28–V48. Residues P49–P172 lie on the Virion surface side of the membrane.

It belongs to the herpesviridae HHV-1 UL45 family.

The protein localises to the virion membrane. Functionally, important virulence factor of HSV neurotropism. Seems to be required for glycoprotein B-induced fusion. Dispensable for growth in vitro. This is Envelope protein UL45 from Homo sapiens (Human).